The primary structure comprises 352 residues: Anthranilate phosphoribosyltransferase (352 aa).

5-phospho-alpha-D-ribose 1-diphosphate contacts are provided by residues Gly94, 97–98, Ser102, 104–107, 122–130, and Ser134; these read GS, NIST, and KHGNRAVSS. Gly94 serves as a coordination point for anthranilate. Ser106 provides a ligand contact to Mg(2+). Anthranilate is bound at residue Asn125. Arg180 contacts anthranilate. Mg(2+) is bound by residues Asp239 and Glu240.

This sequence belongs to the anthranilate phosphoribosyltransferase family. As to quaternary structure, homodimer. It depends on Mg(2+) as a cofactor.

The enzyme catalyses N-(5-phospho-beta-D-ribosyl)anthranilate + diphosphate = 5-phospho-alpha-D-ribose 1-diphosphate + anthranilate. It participates in amino-acid biosynthesis; L-tryptophan biosynthesis; L-tryptophan from chorismate: step 2/5. Its function is as follows. Catalyzes the transfer of the phosphoribosyl group of 5-phosphorylribose-1-pyrophosphate (PRPP) to anthranilate to yield N-(5'-phosphoribosyl)-anthranilate (PRA). This Citrifermentans bemidjiense (strain ATCC BAA-1014 / DSM 16622 / JCM 12645 / Bem) (Geobacter bemidjiensis) protein is Anthranilate phosphoribosyltransferase.